The sequence spans 397 residues: Chalcone synthase 2 (397 aa).

Cys-168 is an active-site residue.

It belongs to the thiolase-like superfamily. Chalcone/stilbene synthases family.

It catalyses the reaction (E)-4-coumaroyl-CoA + 3 malonyl-CoA + 3 H(+) = 2',4,4',6'-tetrahydroxychalcone + 3 CO2 + 4 CoA. It participates in secondary metabolite biosynthesis; flavonoid biosynthesis. Its function is as follows. The primary product of this enzyme is 4,2',4',6'-tetrahydroxychalcone (also termed naringenin-chalcone or chalcone) which can under specific conditions spontaneously isomerize into naringenin. In Daucus carota (Wild carrot), this protein is Chalcone synthase 2 (CHS2).